Reading from the N-terminus, the 1010-residue chain is MAARVLVIGSGGREHTLAWKLAQSPQVKQVLVAPGNAGTACAGKISNAAVSVNDHSALAQFCKDEKIELVVVGPEAPLAAGIVGDLTSAGVRCFGPTAQAAQLESSKKFAKEFMDRHEIPTAQWRAFTNPEDACSFITSANFPALVVKASGLAAGKGVIVAKSQAEACRAVQEIMQEKSFGAAGETVVVEEFLEGEEVSCLCFTDGKTVAEMPPAQDHKRLLDGDEGPNTGGMGAYCPAPQVSKDLLVKIKNTILQRAVDGMQQEGAPYTGILYAGIMLTKDGPKVLEFNCRFGDPECQVILPLLKSDLYEVMQSTLDGLLSASLPVWLENHSAVTVVMASKGYPGAYTKGVEITGFPEAQALGLQVFHAGTALKDGKVVTSGGRVLTVTAVQENLMSALAEARKGLAALKFEGAIYRKDIGFRAVAFLQRPRGLTYKDSGVDIAAGNMLVKKIQPLAKATSRPGCSVDLGGFAGLFDLKAAGFKDPLLASGTDGVGTKLKIAQLCNKHDSIGQDLVAMCVNDILAQGAEPLFFLDYFSCGKLDLSTTEAVIAGIAAACQQAGCALLGGETAEMPNMYPPGEYDLAGFAVGAMERHQKLPQLERITEGDAVIGVASSGLHSNGFSLVRKIVERSSLQYSSPAPGGCGDQTLGDLLLTPTRIYSHSLLPIIRSGRVKAFAHITGGGLLENIPRVLPQKFGVDLDASTWRVPKVFSWLQQEGELSEEEMARTFNCGIGAALVVSKDQAEQVLHDVRRRQEEAWVIGSVVACPEDSPRVRVKNLIETIQTNGSLVANGFLKSNFPVQQKKARVAVLISGTGSNLQALIDSTRDPKSSSHIVLVISNKAAVAGLDRAERAGIPTRVINHKLYKNRVEFDNAVDHVLEEFSVDIVCLAGFMRILSGPFVRKWDGKMLNIHPSLLPSFKGSNAHEQVLEAGVTITGCTVHFVAEDVDAGQIILQEAVPVRRGDTVATLSERVKVAEHKIFPAALQLVASGAVQLREDGKIHWAKEQ.

Ala-2 is modified (N-acetylalanine). Ser-10 bears the Phosphoserine mark. One can recognise an ATP-grasp domain in the interval 111–318; sequence KEFMDRHEIP…LYEVMQSTLD (208 aa). Residues 190–193, Glu-197, Arg-220, and Asn-229 contribute to the ATP site; that span reads EEFL. Mg(2+) is bound by residues Glu-288 and Asn-290. Lys-350 is modified (N6-acetyllysine). Residues 434–809 form an AIRS domain region; the sequence is GLTYKDSGVD…NFPVQQKKAR (376 aa). A phosphoserine mark is found at Ser-440 and Ser-467. At Thr-682 the chain carries Phosphothreonine. The GART domain stretch occupies residues 810–1010; that stretch reads VAVLISGTGS…DGKIHWAKEQ (201 aa). N(1)-(5-phospho-beta-D-ribosyl)glycinamide is bound at residue 818 to 820; it reads GSN. Residues Arg-871, 896 to 899, and Asn-913 contribute to the (6R)-10-formyltetrahydrofolate site; that span reads MRIL. His-915 acts as the Proton donor in catalysis. Position 947 to 951 (947 to 951) interacts with (6R)-10-formyltetrahydrofolate; it reads AEDVD. Residue 977 to 980 participates in N(1)-(5-phospho-beta-D-ribosyl)glycinamide binding; that stretch reads KVAE.

The protein in the N-terminal section; belongs to the GARS family. It in the central section; belongs to the AIR synthase family. This sequence in the C-terminal section; belongs to the GART family. In terms of assembly, homodimer. It depends on Mg(2+) as a cofactor. Mn(2+) serves as cofactor. Detected in liver, kidney and brain.

It catalyses the reaction 5-phospho-beta-D-ribosylamine + glycine + ATP = N(1)-(5-phospho-beta-D-ribosyl)glycinamide + ADP + phosphate + H(+). The catalysed reaction is 2-formamido-N(1)-(5-O-phospho-beta-D-ribosyl)acetamidine + ATP = 5-amino-1-(5-phospho-beta-D-ribosyl)imidazole + ADP + phosphate + H(+). The enzyme catalyses N(1)-(5-phospho-beta-D-ribosyl)glycinamide + (6R)-10-formyltetrahydrofolate = N(2)-formyl-N(1)-(5-phospho-beta-D-ribosyl)glycinamide + (6S)-5,6,7,8-tetrahydrofolate + H(+). It participates in purine metabolism; IMP biosynthesis via de novo pathway; 5-amino-1-(5-phospho-D-ribosyl)imidazole from N(2)-formyl-N(1)-(5-phospho-D-ribosyl)glycinamide: step 2/2. Its pathway is purine metabolism; IMP biosynthesis via de novo pathway; N(1)-(5-phospho-D-ribosyl)glycinamide from 5-phospho-alpha-D-ribose 1-diphosphate: step 2/2. It functions in the pathway purine metabolism; IMP biosynthesis via de novo pathway; N(2)-formyl-N(1)-(5-phospho-D-ribosyl)glycinamide from N(1)-(5-phospho-D-ribosyl)glycinamide (10-formyl THF route): step 1/1. Trifunctional enzyme that catalyzes three distinct reactions as part of the 'de novo' inosine monophosphate biosynthetic pathway. The polypeptide is Trifunctional purine biosynthetic protein adenosine-3 (Gart) (Mus musculus (Mouse)).